We begin with the raw amino-acid sequence, 66 residues long: UPF0337 protein spyM18_1212 (66 aa).

Belongs to the UPF0337 (CsbD) family.

This is UPF0337 protein spyM18_1212 from Streptococcus pyogenes serotype M18 (strain MGAS8232).